Consider the following 127-residue polypeptide: Fatty acid-binding protein, liver (127 aa).

The residue at position 1 (Met-1) is an N-acetylmethionine. 2 positions are modified to N6-succinyllysine: Lys-31 and Lys-36. A Phosphoserine modification is found at Ser-39. Residue Lys-46 is modified to N6-succinyllysine. A Phosphoserine modification is found at Ser-56. N6-succinyllysine occurs at positions 57, 78, and 90. Ser-100 is subject to Phosphoserine. Asn-105 is subject to Deamidated asparagine; alternate. Positions 105 to 106 form a cross-link, isoaspartyl glycine isopeptide (Asn-Gly); alternate; sequence NG. Lys-121 carries the N6-succinyllysine modification.

Belongs to the calycin superfamily. Fatty-acid binding protein (FABP) family. Monomer. Deamidation and transpeptidation at the beta carboxyl of Asn-105 forms an isoaspartyl residue and Edman degradation appears as though blocked. This rearrangement gives rise to an extra negative charge carried by the acid form.

The protein resides in the cytoplasm. Its function is as follows. Plays a role in lipoprotein-mediated cholesterol uptake in hepatocytes. Binds cholesterol. Binds free fatty acids and their coenzyme A derivatives, bilirubin, and some other small molecules in the cytoplasm. May be involved in intracellular lipid transport. The protein is Fatty acid-binding protein, liver (FABP1) of Bos taurus (Bovine).